The primary structure comprises 441 residues: Glutamate--tRNA ligase 1 (441 aa).

The short motif at P8 to N18 is the 'HIGH' region element. A 'KMSKS' region motif is present at residues A239 to R243. An ATP-binding site is contributed by K242.

Belongs to the class-I aminoacyl-tRNA synthetase family. Glutamate--tRNA ligase type 1 subfamily. In terms of assembly, monomer.

It localises to the cytoplasm. The catalysed reaction is tRNA(Glu) + L-glutamate + ATP = L-glutamyl-tRNA(Glu) + AMP + diphosphate. In terms of biological role, catalyzes the attachment of glutamate to tRNA(Glu) in a two-step reaction: glutamate is first activated by ATP to form Glu-AMP and then transferred to the acceptor end of tRNA(Glu). This is Glutamate--tRNA ligase 1 from Roseobacter denitrificans (strain ATCC 33942 / OCh 114) (Erythrobacter sp. (strain OCh 114)).